The primary structure comprises 552 residues: Putative transport protein YPTS_4123 (552 aa).

6 helical membrane-spanning segments follow: residues 1 to 21, 26 to 46, 65 to 85, 96 to 116, 119 to 139, and 158 to 178; these read MSAI…GLWI, IYGV…VGHF, FGLI…FFSS, FAIL…KLFA, LPII…LGAA, and MGYA…MWLI. RCK C-terminal domains follow at residues 192–276 and 279–361; these read AFDS…VVGE and DVTL…IVGN. The next 6 membrane-spanning stretches (helical) occupy residues 371 to 391, 393 to 413, 439 to 459, 464 to 484, 493 to 513, and 530 to 550; these read MLPV…PLFV, GFPA…ALIL, IVLF…NTLV, LAWI…VGIL, YLTL…LAFA, and VYPL…VLFW.

It belongs to the AAE transporter (TC 2.A.81) family. YidE subfamily.

It is found in the cell membrane. The sequence is that of Putative transport protein YPTS_4123 from Yersinia pseudotuberculosis serotype IB (strain PB1/+).